We begin with the raw amino-acid sequence, 278 residues long: Trans-2,3-dihydro-3-hydroxyanthranilate isomerase (278 aa).

Glu45 is a catalytic residue.

Belongs to the PhzF family.

The enzyme catalyses (5S,6S)-6-amino-5-hydroxycyclohexa-1,3-diene-1-carboxyate = (1R,6S)-6-amino-5-oxocyclohex-2-ene-1-carboxylate. The protein operates within secondary metabolite biosynthesis; pyocyanine biosynthesis. In terms of biological role, isomerase that catalyzes the condensation of two molecules of trans-2,3-dihydro-3-hydroxyanthranilic acid (DHHA) into the phenazine ring system. The final product is not yet known. This Pseudomonas aeruginosa (strain ATCC 15692 / DSM 22644 / CIP 104116 / JCM 14847 / LMG 12228 / 1C / PRS 101 / PAO1) protein is Trans-2,3-dihydro-3-hydroxyanthranilate isomerase (phzF1).